Here is a 349-residue protein sequence, read N- to C-terminus: Ethyl acetate hydrolase (349 aa).

One can recognise an AB hydrolase-1 domain in the interval 67–300; that stretch reads YIGEGRALDP…SHDQFFTVDD (234 aa). Residue Ser139 is the Nucleophile of the active site. Residues Asp293 and His322 contribute to the active site.

Belongs to the AB hydrolase superfamily. Acetyl esterase family. Homodimer.

It carries out the reaction ethyl acetate + H2O = ethanol + acetate + H(+). Its function is as follows. Esterase that catalyzes the hydrolysis of ethyl acetate. Involved in the degradation of short chain methyl ketones (MEK) such as 2-butanone and 2-hexanone. In vitro, can also hydrolyze vinyl acetate, 4-nitrophenyl acetate, methyl acetate, propyl acetate, benzyl acetate and methyl propionate. The highest activities are obtained with acetic acid esters, but the alcohol group also plays an important role, as compounds with two carbon atoms in the alcohol moiety, i.e., vinyl and ethyl acetate, are by far the preferred substrates. The protein is Ethyl acetate hydrolase of Pseudomonas veronii.